The chain runs to 298 residues: HTH-type transcriptional regulator ArgP (298 aa).

An HTH lysR-type domain is found at 4–60 (LDYRWIEALDSVVSKGSFERAAEQLFISQSAVSQRIKQLEKYLAQPVLIREQPPRPT). Residues 21 to 40 (FERAAEQLFISQSAVSQRIK) constitute a DNA-binding region (H-T-H motif).

It belongs to the LysR transcriptional regulatory family. In terms of assembly, homodimer.

Functionally, controls the transcription of genes involved in arginine and lysine metabolism. The sequence is that of HTH-type transcriptional regulator ArgP from Vibrio cholerae serotype O1 (strain ATCC 39315 / El Tor Inaba N16961).